The primary structure comprises 395 residues: Acid ceramidase (395 aa).

The first 20 residues, 1–20 (MLGWSRLTFILLSGIVTCLV), serve as a signal peptide directing secretion. A disulfide bridge links C31 with C340. The Nucleophile role is filled by C143. N-linked (GlcNAc...) asparagine glycans are attached at residues N195, N259, N286, and N342. The cysteines at positions 388 and 392 are disulfide-linked.

Belongs to the acid ceramidase family. Heterodimer; disulfide-linked. The heterodimer is composed of the disulfide-linked alpha and beta chains produced by autocatalytic cleavage of the precursor. N-glycosylated. Post-translationally, proteolytically cleaved into two chains alpha and beta that remain associated via a disulfide bond. Cleavage gives rise to a conformation change that activates the enzyme. The same catalytic Cys residue mediates the autoproteolytic cleavage and subsequent hydrolysis of lipid substrates. The beta chain may undergo an additional C-terminal processing.

The protein localises to the lysosome. It localises to the secreted. It catalyses the reaction an N-acylsphing-4-enine + H2O = sphing-4-enine + a fatty acid. It carries out the reaction N-dodecanoylsphing-4-enine + H2O = dodecanoate + sphing-4-enine. The enzyme catalyses N-tetradecanoylsphing-4-enine + H2O = tetradecanoate + sphing-4-enine. The catalysed reaction is N-hexadecanoylsphing-4-enine + H2O = sphing-4-enine + hexadecanoate. It catalyses the reaction N-octadecanoylsphing-4-enine + H2O = sphing-4-enine + octadecanoate. It carries out the reaction N-dodecanoyl-(4R)-hydroxysphinganine + H2O = (4R)-hydroxysphinganine + dodecanoate. The enzyme catalyses N-(dodecanoyl)-sphinganine + H2O = dodecanoate + sphinganine. The catalysed reaction is N-(acetyl)-sphing-4-enine + H2O = sphing-4-enine + acetate. It catalyses the reaction N-(hexanoyl)sphing-4-enine + H2O = hexanoate + sphing-4-enine. It carries out the reaction N-octanoylsphing-4-enine + H2O = octanoate + sphing-4-enine. The enzyme catalyses N-(9Z-octadecenoyl)-sphing-4-enine + H2O = sphing-4-enine + (9Z)-octadecenoate. The catalysed reaction is N-dodecanoylethanolamine + H2O = dodecanoate + ethanolamine. Its pathway is lipid metabolism; sphingolipid metabolism. Lysosomal ceramidase that hydrolyzes sphingolipid ceramides into sphingosine and free fatty acids at acidic pH. Ceramides, sphingosine, and its phosphorylated form sphingosine-1-phosphate are bioactive lipids that mediate cellular signaling pathways regulating several biological processes including cell proliferation, apoptosis and differentiation. Has a higher catalytic efficiency towards C12-ceramides versus other ceramides. Also catalyzes the reverse reaction allowing the synthesis of ceramides from fatty acids and sphingosine. For the reverse synthetic reaction, the natural sphingosine D-erythro isomer is more efficiently utilized as a substrate compared to D-erythro-dihydrosphingosine and D-erythro-phytosphingosine, while the fatty acids with chain lengths of 12 or 14 carbons are the most efficiently used. Also has an N-acylethanolamine hydrolase activity. By regulating the levels of ceramides, sphingosine and sphingosine-1-phosphate in the epidermis, mediates the calcium-induced differentiation of epidermal keratinocytes. Also indirectly regulates tumor necrosis factor/TNF-induced apoptosis. By regulating the intracellular balance between ceramides and sphingosine, in adrenocortical cells, probably also acts as a regulator of steroidogenesis. This is Acid ceramidase from Bos taurus (Bovine).